The primary structure comprises 457 residues: Antizyme inhibitor 2 (457 aa).

A necessary for polyamine uptake stimulation region spans residues 115–138 (QVAQIKYAAKHGVRLLSFDNEVEL).

Belongs to the Orn/Lys/Arg decarboxylase class-II family. ODC antizyme inhibitor subfamily. As to quaternary structure, monomer. Interacts with OAZ1, OAZ2 and OAZ3; this interaction disrupts the interaction between the antizyme and ODC1. Does not form a heterodimer with ODC1. Ubiquitinated, leading to its proteasomal degradation; a process that is reduced in presence of antizymes. May also be degraded through the lysosomal degradative pathway in a proteasomal-independent manner.

It localises to the nucleus. Its subcellular location is the cytoplasm. The protein resides in the perinuclear region. The protein localises to the membrane. It is found in the cytoplasmic vesicle. It localises to the endoplasmic reticulum-Golgi intermediate compartment. Its subcellular location is the golgi apparatus. The protein resides in the cis-Golgi network. The protein localises to the trans-Golgi network. It is found in the cytoplasmic granule. It localises to the cell projection. Its subcellular location is the axon. The protein resides in the dendrite. The protein localises to the perikaryon. In terms of biological role, antizyme inhibitor (AZI) protein that positively regulates ornithine decarboxylase (ODC) activity and polyamine uptake. AZI is an enzymatically inactive ODC homolog that counteracts the negative effect of ODC antizymes (AZs) OAZ1, OAZ2 and OAZ3 on ODC activity by competing with ODC for antizyme-binding. Inhibits antizyme-dependent ODC degradation and releases ODC monomers from their inactive complex with antizymes, leading to formation of the catalytically active ODC homodimer and restoring polyamine production. Participates in the morphological integrity of the trans-Golgi network (TGN) and functions as a regulator of intracellular secretory vesicle trafficking. The chain is Antizyme inhibitor 2 (Azin2) from Rattus norvegicus (Rat).